The primary structure comprises 224 residues: ATP synthase subunit a (224 aa).

Transmembrane regions (helical) follow at residues F17–L37, I72–I92, L99–I119, M125–I145, I166–L186, and V187–I207.

Belongs to the ATPase A chain family. In terms of assembly, F-type ATPases have 2 components, CF(1) - the catalytic core - and CF(0) - the membrane proton channel. CF(1) has five subunits: alpha(3), beta(3), gamma(1), delta(1), epsilon(1). CF(0) has three main subunits: a, b and c.

It localises to the mitochondrion inner membrane. Its function is as follows. Mitochondrial membrane ATP synthase (F(1)F(0) ATP synthase or Complex V) produces ATP from ADP in the presence of a proton gradient across the membrane which is generated by electron transport complexes of the respiratory chain. F-type ATPases consist of two structural domains, F(1) - containing the extramembraneous catalytic core and F(0) - containing the membrane proton channel, linked together by a central stalk and a peripheral stalk. During catalysis, ATP synthesis in the catalytic domain of F(1) is coupled via a rotary mechanism of the central stalk subunits to proton translocation. Key component of the proton channel; it may play a direct role in the translocation of protons across the membrane. The polypeptide is ATP synthase subunit a (mt:ATPase6) (Drosophila melanogaster (Fruit fly)).